The primary structure comprises 304 residues: Methionyl-tRNA formyltransferase (304 aa).

107 to 110 (SLLP) contributes to the (6S)-5,6,7,8-tetrahydrofolate binding site.

This sequence belongs to the Fmt family.

It carries out the reaction L-methionyl-tRNA(fMet) + (6R)-10-formyltetrahydrofolate = N-formyl-L-methionyl-tRNA(fMet) + (6S)-5,6,7,8-tetrahydrofolate + H(+). In terms of biological role, attaches a formyl group to the free amino group of methionyl-tRNA(fMet). The formyl group appears to play a dual role in the initiator identity of N-formylmethionyl-tRNA by promoting its recognition by IF2 and preventing the misappropriation of this tRNA by the elongation apparatus. The protein is Methionyl-tRNA formyltransferase of Coprothermobacter proteolyticus (strain ATCC 35245 / DSM 5265 / OCM 4 / BT).